The following is a 492-amino-acid chain: 2,3-bisphosphoglycerate-independent phosphoglycerate mutase (492 aa).

Residues Asp-11 and Ser-61 each contribute to the Mn(2+) site. Residue Ser-61 is the Phosphoserine intermediate of the active site. Substrate-binding positions include His-118, 147–148, Arg-178, Arg-184, 248–251, and Lys-320; these read RD and RNDR. 5 residues coordinate Mn(2+): Asp-386, His-390, Asp-427, His-428, and His-445.

Belongs to the BPG-independent phosphoglycerate mutase family. Monomer. It depends on Mn(2+) as a cofactor.

The enzyme catalyses (2R)-2-phosphoglycerate = (2R)-3-phosphoglycerate. Its pathway is carbohydrate degradation; glycolysis; pyruvate from D-glyceraldehyde 3-phosphate: step 3/5. In terms of biological role, catalyzes the interconversion of 2-phosphoglycerate and 3-phosphoglycerate. This chain is 2,3-bisphosphoglycerate-independent phosphoglycerate mutase, found in Campylobacter jejuni (strain RM1221).